Reading from the N-terminus, the 2197-residue chain is RNA1 polyprotein (2197 aa).

Residues 621–1167 (GLTDVFGVPL…YDWVYANGGK (547 aa)) are Cytoplasmic-facing. The SF3 helicase domain occupies 766–933 (VKRLSDLHKR…EGVAYNPSDP (168 aa)). 796–803 (GGPRCGKS) serves as a coordination point for ATP. A helical membrane pass occupies residues 1168 to 1188 (LLLVLAAVILILFFGSACIKL). Residues 1189–1212 (MQAIFCGAAGGTVSMAAVGKMTVQ) lie on the Lumenal side of the membrane. Asn-1228 carries an N-linked (GlcNAc...) asparagine; by host glycan. Residues 1243–1475 (LAEAQFNESH…MPRYISHASF (233 aa)) form the Peptidase C3 domain. Catalysis depends on for picornain 3C-like protease activity residues His-1283, Glu-1331, and Cys-1433. The 124-residue stretch at 1765 to 1888 (SVALNCDYSR…SIKPDTMKYF (124 aa)) folds into the RdRp catalytic domain.

The protein belongs to the nepoviruses RNA1 polyprotein family. Post-translationally, specific enzymatic cleavages by picornain 3C-like protease in vivo yield mature proteins. Picornain 3C-like protease is autocatalytically processed. NTB exists as NTB-VPg polyprotein as well as NTB mature protein. In terms of processing, VPg is uridylylated by the polymerase and is covalently linked to the 5'-end of genomic RNA. This uridylylated form acts as a nucleotide-peptide primer for the polymerase.

Its subcellular location is the host endoplasmic reticulum lumen. The protein resides in the host endoplasmic reticulum membrane. The enzyme catalyses RNA(n) + a ribonucleoside 5'-triphosphate = RNA(n+1) + diphosphate. Functionally, picornain 3C-like protease is a thiol protease that cleaves at Gln-|-Gly or Gln-|-Ser sites in the P1 and P2 polyproteins. Its function is as follows. The VPg-NTB polyprotein may act as a membrane-anchor for the replication complex. This is RNA1 polyprotein from Tomato ringspot virus (isolate raspberry) (ToRSV).